The primary structure comprises 258 residues: D-aminoacyl-tRNA deacylase (258 aa).

Belongs to the DtdA deacylase family. As to quaternary structure, monomer. Zn(2+) serves as cofactor.

It carries out the reaction a D-aminoacyl-tRNA + H2O = a tRNA + a D-alpha-amino acid + H(+). It catalyses the reaction glycyl-tRNA(Ala) + H2O = tRNA(Ala) + glycine + H(+). D-aminoacyl-tRNA deacylase with broad substrate specificity. By recycling D-aminoacyl-tRNA to D-amino acids and free tRNA molecules, this enzyme counteracts the toxicity associated with the formation of D-aminoacyl-tRNA entities in vivo. The protein is D-aminoacyl-tRNA deacylase of Cenarchaeum symbiosum (strain A).